The sequence spans 240 residues: tRNA (guanine-N(1)-)-methyltransferase (240 aa).

Residues Gly110 and 129 to 134 contribute to the S-adenosyl-L-methionine site; that span reads LGDFVL.

This sequence belongs to the RNA methyltransferase TrmD family. Homodimer.

It localises to the cytoplasm. It catalyses the reaction guanosine(37) in tRNA + S-adenosyl-L-methionine = N(1)-methylguanosine(37) in tRNA + S-adenosyl-L-homocysteine + H(+). Specifically methylates guanosine-37 in various tRNAs. The sequence is that of tRNA (guanine-N(1)-)-methyltransferase from Clostridium botulinum (strain Kyoto / Type A2).